A 126-amino-acid polypeptide reads, in one-letter code: Fluoride-specific ion channel FluC (126 aa).

The next 4 helical transmembrane spans lie at 6-26, 32-52, 68-90, and 102-122; these read VLLV…VALA, TGFP…IGFI, LLLT…ETGG, and LYVA…TLLA. Gly-76 and Thr-79 together coordinate Na(+).

It belongs to the fluoride channel Fluc/FEX (TC 1.A.43) family.

It localises to the cell inner membrane. It carries out the reaction fluoride(in) = fluoride(out). Its activity is regulated as follows. Na(+) is not transported, but it plays an essential structural role and its presence is essential for fluoride channel function. Fluoride-specific ion channel. Important for reducing fluoride concentration in the cell, thus reducing its toxicity. This chain is Fluoride-specific ion channel FluC, found in Chlorobaculum tepidum (strain ATCC 49652 / DSM 12025 / NBRC 103806 / TLS) (Chlorobium tepidum).